A 229-amino-acid polypeptide reads, in one-letter code: uncharacterized protein (229 aa).

The tract at residues 1–41 (MRSAKVGVARQLETKKPQTGRKISTSSRGTIHSQQSQPEDI) is disordered. Over residues 21 to 39 (RKISTSSRGTIHSQQSQPE) the composition is skewed to polar residues. EF-hand domains follow at residues 48–83 (KELK…IGLH), 84–119 (ANKA…SQNI), 123–158 (TNEE…FGDF), and 159–193 (DDEL…YLLN). Residues D61, D63, S65, E72, D97, D99, N101, E103, E108, D136, D138, N140, and E147 each contribute to the Ca(2+) site. Residues 194-217 (DPKHDIDTGDSDVERYDDRHDDRA) show a composition bias toward basic and acidic residues. The segment at 194–229 (DPKHDIDTGDSDVERYDDRHDDRASPMPNHLSTVPE) is disordered.

This is an uncharacterized protein from Caenorhabditis elegans.